The sequence spans 206 residues: High frequency lysogenization protein HflD homolog (206 aa).

It belongs to the HflD family.

Its subcellular location is the cytoplasm. It localises to the cell inner membrane. The polypeptide is High frequency lysogenization protein HflD homolog (Pseudomonas savastanoi pv. phaseolicola (strain 1448A / Race 6) (Pseudomonas syringae pv. phaseolicola (strain 1448A / Race 6))).